The primary structure comprises 567 residues: Periplasmic [NiFe] hydrogenase large subunit (567 aa).

Glutamate 62 serves as a coordination point for Mg(2+). Ni(2+) contacts are provided by cysteine 81 and cysteine 84. Residue cysteine 84 participates in Fe cation binding. Position 498 (leucine 498) interacts with Mg(2+). Ni(2+) is bound by residues cysteine 546 and cysteine 549. Cysteine 549 is a binding site for Fe cation. A Mg(2+)-binding site is contributed by histidine 552. The propeptide occupies 553 to 567; the sequence is VIDGHTNEVHKFRIL.

This sequence belongs to the [NiFe]/[NiFeSe] hydrogenase large subunit family. In terms of assembly, heterodimer of a large and a small subunit. It depends on Ni(2+) as a cofactor. Fe cation serves as cofactor.

It is found in the periplasm. It catalyses the reaction 2 Fe(III)-[cytochrome c3] + H2 = 2 Fe(II)-[cytochrome c3] + 2 H(+). Catalyzes the reversible oxidoreduction of molecular hydrogen, in conjunction with a specific electron acceptor, cytochrome c3. This chain is Periplasmic [NiFe] hydrogenase large subunit (hydB), found in Nitratidesulfovibrio vulgaris (strain DSM 19637 / Miyazaki F) (Desulfovibrio vulgaris).